We begin with the raw amino-acid sequence, 161 residues long: 2-C-methyl-D-erythritol 2,4-cyclodiphosphate synthase (161 aa).

A divalent metal cation contacts are provided by Asp14 and His16. 4-CDP-2-C-methyl-D-erythritol 2-phosphate contacts are provided by residues 14–16 (DVH) and 40–41 (HS). An a divalent metal cation-binding site is contributed by His48. Residues 62 to 64 (DLG), Phe142, and Arg145 each bind 4-CDP-2-C-methyl-D-erythritol 2-phosphate.

Belongs to the IspF family. Homotrimer. Requires a divalent metal cation as cofactor.

It carries out the reaction 4-CDP-2-C-methyl-D-erythritol 2-phosphate = 2-C-methyl-D-erythritol 2,4-cyclic diphosphate + CMP. It participates in isoprenoid biosynthesis; isopentenyl diphosphate biosynthesis via DXP pathway; isopentenyl diphosphate from 1-deoxy-D-xylulose 5-phosphate: step 4/6. Its function is as follows. Involved in the biosynthesis of isopentenyl diphosphate (IPP) and dimethylallyl diphosphate (DMAPP), two major building blocks of isoprenoid compounds. Catalyzes the conversion of 4-diphosphocytidyl-2-C-methyl-D-erythritol 2-phosphate (CDP-ME2P) to 2-C-methyl-D-erythritol 2,4-cyclodiphosphate (ME-CPP) with a corresponding release of cytidine 5-monophosphate (CMP). The polypeptide is 2-C-methyl-D-erythritol 2,4-cyclodiphosphate synthase (Acidothermus cellulolyticus (strain ATCC 43068 / DSM 8971 / 11B)).